The sequence spans 247 residues: DNA repair protein RecO (247 aa).

This sequence belongs to the RecO family.

Its function is as follows. Involved in DNA repair and RecF pathway recombination. The polypeptide is DNA repair protein RecO (Brucella abortus (strain 2308)).